A 126-amino-acid polypeptide reads, in one-letter code: Arginine decarboxylase proenzyme (126 aa).

Catalysis depends on Ser74, which acts as the Schiff-base intermediate with substrate; via pyruvic acid. Residue Ser74 is modified to Pyruvic acid (Ser); by autocatalysis. The active-site Proton acceptor; for processing activity is the His79. Residue Cys94 is the Proton donor; for catalytic activity of the active site.

The protein belongs to the prokaryotic AdoMetDC family. Type 1 subfamily. In terms of assembly, heterooctamer of four alpha and four beta chains arranged as a tetramer of alpha/beta heterodimers. Pyruvate serves as cofactor. Post-translationally, is synthesized initially as an inactive proenzyme. Formation of the active enzyme involves a self-maturation process in which the active site pyruvoyl group is generated from an internal serine residue via an autocatalytic post-translational modification. Two non-identical subunits are generated from the proenzyme in this reaction, and the pyruvate is formed at the N-terminus of the alpha chain, which is derived from the carboxyl end of the proenzyme. The post-translation cleavage follows an unusual pathway, termed non-hydrolytic serinolysis, in which the side chain hydroxyl group of the serine supplies its oxygen atom to form the C-terminus of the beta chain, while the remainder of the serine residue undergoes an oxidative deamination to produce ammonia and the pyruvoyl group blocking the N-terminus of the alpha chain.

The catalysed reaction is L-arginine + H(+) = agmatine + CO2. The protein operates within amine and polyamine biosynthesis; agmatine biosynthesis; agmatine from L-arginine: step 1/1. Specifically catalyzes the decarboxylation of L-arginine to agmatine. Has no S-adenosylmethionine decarboxylase (AdoMetDC) activity. The polypeptide is Arginine decarboxylase proenzyme (Pyrobaculum aerophilum (strain ATCC 51768 / DSM 7523 / JCM 9630 / CIP 104966 / NBRC 100827 / IM2)).